The sequence spans 191 residues: Ion-translocating oxidoreductase complex subunit B (191 aa).

The hydrophobic stretch occupies residues 1-26; sequence MSLVLVAVLALLGLCLIAGAILGFAA. In terms of domain architecture, 4Fe-4S spans 32-90; it reads EGDPIAEQINALLPQTQCGQCGYPGCKPYAEAIAGGDKINKCPPGGEATIQALADLLDV. The [4Fe-4S] cluster site is built by C49, C52, C57, C73, C114, C117, C120, C124, C144, C147, C150, and C154. 2 4Fe-4S ferredoxin-type domains span residues 105-134 and 135-164; these read MVAF…GAAR and QMHT…MIEV.

This sequence belongs to the 4Fe4S bacterial-type ferredoxin family. RnfB subfamily. As to quaternary structure, the complex is composed of six subunits: RnfA, RnfB, RnfC, RnfD, RnfE and RnfG. It depends on [4Fe-4S] cluster as a cofactor.

It localises to the cell inner membrane. Part of a membrane-bound complex that couples electron transfer with translocation of ions across the membrane. This chain is Ion-translocating oxidoreductase complex subunit B, found in Ectopseudomonas mendocina (strain ymp) (Pseudomonas mendocina).